The sequence spans 208 residues: Large ribosomal subunit protein uL3c (208 aa).

A disordered region spans residues 129 to 165 (TRGPMTHGSKNHREPGSIGQGSTPGKVHKGKKMAGRL).

It belongs to the universal ribosomal protein uL3 family. In terms of assembly, part of the 50S ribosomal subunit.

The protein localises to the plastid. It localises to the chloroplast. One of the primary rRNA binding proteins, it binds directly near the 3'-end of the 23S rRNA, where it nucleates assembly of the 50S subunit. This Rhodomonas salina (Cryptomonas salina) protein is Large ribosomal subunit protein uL3c (rpl3).